The chain runs to 81 residues: NAD(P)H-quinone oxidoreductase subunit O (81 aa).

Belongs to the complex I NdhO subunit family. As to quaternary structure, NDH-1 can be composed of about 15 different subunits; different subcomplexes with different compositions have been identified which probably have different functions.

Its subcellular location is the cellular thylakoid membrane. The catalysed reaction is a plastoquinone + NADH + (n+1) H(+)(in) = a plastoquinol + NAD(+) + n H(+)(out). The enzyme catalyses a plastoquinone + NADPH + (n+1) H(+)(in) = a plastoquinol + NADP(+) + n H(+)(out). Its function is as follows. NDH-1 shuttles electrons from an unknown electron donor, via FMN and iron-sulfur (Fe-S) centers, to quinones in the respiratory and/or the photosynthetic chain. The immediate electron acceptor for the enzyme in this species is believed to be plastoquinone. Couples the redox reaction to proton translocation, and thus conserves the redox energy in a proton gradient. Cyanobacterial NDH-1 also plays a role in inorganic carbon-concentration. This chain is NAD(P)H-quinone oxidoreductase subunit O, found in Prochlorococcus marinus (strain MIT 9303).